The sequence spans 246 residues: Large ribosomal subunit protein uL3 (246 aa).

2 disordered regions span residues 140-162 (SHRSIGSTGGRQDPGKTFKNKKM) and 215-246 (DVPLPGKFRENGSAGASQVEAAPEAPASEENA). Gln-151 bears the N5-methylglutamine mark. Over residues 234–246 (EAAPEAPASEENA) the composition is skewed to low complexity.

The protein belongs to the universal ribosomal protein uL3 family. Part of the 50S ribosomal subunit. Forms a cluster with proteins L14 and L19. Methylated by PrmB.

Functionally, one of the primary rRNA binding proteins, it binds directly near the 3'-end of the 23S rRNA, where it nucleates assembly of the 50S subunit. This Methylorubrum populi (strain ATCC BAA-705 / NCIMB 13946 / BJ001) (Methylobacterium populi) protein is Large ribosomal subunit protein uL3.